Reading from the N-terminus, the 323-residue chain is Small ribosomal subunit protein mS35 (323 aa).

Residues 31-59 (PVPTPSLPERTPGNERPPRRKALPPRTEK) form a disordered region. Residues 257–321 (SSERNILETL…YKESVKRLLN (65 aa)) adopt a coiled-coil conformation.

Belongs to the mitochondrion-specific ribosomal protein mS35 family. As to quaternary structure, component of the mitochondrial small ribosomal subunit (mt-SSU). Mature mammalian 55S mitochondrial ribosomes consist of a small (28S) and a large (39S) subunit. The 28S small subunit contains a 12S ribosomal RNA (12S mt-rRNA) and 30 different proteins. The 39S large subunit contains a 16S rRNA (16S mt-rRNA), a copy of mitochondrial valine transfer RNA (mt-tRNA(Val)), which plays an integral structural role, and 52 different proteins.

The protein resides in the mitochondrion. This Homo sapiens (Human) protein is Small ribosomal subunit protein mS35.